The following is a 236-amino-acid chain: Small ribosomal subunit protein uS2c (236 aa).

It belongs to the universal ribosomal protein uS2 family.

It is found in the plastid. The protein resides in the chloroplast. The sequence is that of Small ribosomal subunit protein uS2c (rps2) from Lepidium virginicum (Virginia pepperweed).